The chain runs to 468 residues: Interstitial collagenase (468 aa).

The N-terminal stretch at 1-18 (MPGLPLLLLLLWGVGSHG) is a signal peptide. A propeptide spans 19–98 (FPAASETQEQ…PRCGVPDVAQ (80 aa)) (activation peptide). Positions 89–96 (PRCGVPDV) match the Cysteine switch motif. Zn(2+) is bound at residue Cys-91. N-linked (GlcNAc...) asparagine glycosylation is present at Asn-119. Ca(2+)-binding residues include Asp-123 and Asp-157. Residues His-167 and Asp-169 each coordinate Zn(2+). The Ca(2+) site is built by Asp-174, Gly-175, Glu-177, and Gln-179. His-182 contributes to the Zn(2+) binding site. Gly-189, Gly-191, and Asp-193 together coordinate Ca(2+). His-195 lines the Zn(2+) pocket. Residues Asp-197, Glu-198, and Asp-200 each contribute to the Ca(2+) site. His-217 is a Zn(2+) binding site. Glu-218 is an active-site residue. The Zn(2+) site is built by His-221 and His-227. Thr-273 carries the phosphothreonine modification. Hemopexin repeat units follow at residues 274–323 (PKVC…WPHL), 324–370 (PNGL…FGFP), 373–421 (VNHI…FPGI), and 422–465 (GNKV…WFNC). A disulfide bridge links Cys-277 with Cys-465. Positions 284 and 328 each coordinate Ca(2+). Tyr-359 carries the post-translational modification Phosphotyrosine; by PKDCC. Residues Asp-377 and Asp-426 each coordinate Ca(2+).

The protein belongs to the peptidase M10A family. Ca(2+) serves as cofactor. It depends on Zn(2+) as a cofactor. Tyrosine phosphorylated in platelets by PKDCC/VLK.

The protein resides in the secreted. It is found in the extracellular space. Its subcellular location is the extracellular matrix. It carries out the reaction Cleavage of the triple helix of collagen at about three-quarters of the length of the molecule from the N-terminus, at 775-Gly-|-Ile-776 in the alpha1(I) chain. Cleaves synthetic substrates and alpha-macroglobulins at bonds where P1' is a hydrophobic residue.. With respect to regulation, can be activated without removal of the activation peptide. Its function is as follows. Cleaves collagens of types I, II, and III at one site in the helical domain. Also cleaves collagens of types VII and X. This chain is Interstitial collagenase (MMP1), found in Oryctolagus cuniculus (Rabbit).